A 344-amino-acid chain; its full sequence is Serine/threonine-protein kinase ppk13 (344 aa).

ATP-binding positions include 38–46 and lysine 61; that span reads LGEGGFAFV. The Protein kinase domain occupies 76–344; that stretch reads MKEADYHRKF…LSKIDLQINQ (269 aa). Residue histidine 192 is the Proton acceptor of the active site.

It belongs to the protein kinase superfamily. Ser/Thr protein kinase family.

It is found in the endoplasmic reticulum. The protein resides in the golgi apparatus. It carries out the reaction L-seryl-[protein] + ATP = O-phospho-L-seryl-[protein] + ADP + H(+). The enzyme catalyses L-threonyl-[protein] + ATP = O-phospho-L-threonyl-[protein] + ADP + H(+). The protein is Serine/threonine-protein kinase ppk13 (ppk13) of Schizosaccharomyces pombe (strain 972 / ATCC 24843) (Fission yeast).